A 378-amino-acid polypeptide reads, in one-letter code: UPF0754 membrane protein BCA_0919 (378 aa).

A run of 2 helical transmembrane segments spans residues 1–21 and 357–377; these read MNIW…GGFT and YLGA…LLFL.

This sequence belongs to the UPF0754 family.

It is found in the cell membrane. This chain is UPF0754 membrane protein BCA_0919, found in Bacillus cereus (strain 03BB102).